The following is a 436-amino-acid chain: Ribosomal protein uS12 methylthiotransferase RimO (436 aa).

Positions 2–114 constitute an MTTase N-terminal domain; the sequence is PNLYLVSLGC…IDEMILKKQN (113 aa). Residues cysteine 11, cysteine 45, cysteine 77, cysteine 146, cysteine 150, and cysteine 153 each contribute to the [4Fe-4S] cluster site. Residues 132–363 enclose the Radical SAM core domain; it reads TGSSYHAYIK…IKKQIEGSFK (232 aa). Residues 363-434 form the TRAM domain; that stretch reads KSLVGEVIKV…KDKLIGEIIC (72 aa).

It belongs to the methylthiotransferase family. RimO subfamily. It depends on [4Fe-4S] cluster as a cofactor.

It localises to the cytoplasm. The catalysed reaction is L-aspartate(89)-[ribosomal protein uS12]-hydrogen + (sulfur carrier)-SH + AH2 + 2 S-adenosyl-L-methionine = 3-methylsulfanyl-L-aspartate(89)-[ribosomal protein uS12]-hydrogen + (sulfur carrier)-H + 5'-deoxyadenosine + L-methionine + A + S-adenosyl-L-homocysteine + 2 H(+). In terms of biological role, catalyzes the methylthiolation of an aspartic acid residue of ribosomal protein uS12. This chain is Ribosomal protein uS12 methylthiotransferase RimO, found in Campylobacter fetus subsp. fetus (strain 82-40).